The following is a 219-amino-acid chain: Thiamine-phosphate synthase (219 aa).

4-amino-2-methyl-5-(diphosphooxymethyl)pyrimidine is bound by residues 48 to 52 and Asn84; that span reads QFRQK. 2 residues coordinate Mg(2+): Asp85 and Asp104. Ser123 serves as a coordination point for 4-amino-2-methyl-5-(diphosphooxymethyl)pyrimidine. 150–152 serves as a coordination point for 2-[(2R,5Z)-2-carboxy-4-methylthiazol-5(2H)-ylidene]ethyl phosphate; it reads TPS. Lys153 is a 4-amino-2-methyl-5-(diphosphooxymethyl)pyrimidine binding site. Residues Gly181 and 199-200 each bind 2-[(2R,5Z)-2-carboxy-4-methylthiazol-5(2H)-ylidene]ethyl phosphate; that span reads IS.

This sequence belongs to the thiamine-phosphate synthase family. It depends on Mg(2+) as a cofactor.

It catalyses the reaction 2-[(2R,5Z)-2-carboxy-4-methylthiazol-5(2H)-ylidene]ethyl phosphate + 4-amino-2-methyl-5-(diphosphooxymethyl)pyrimidine + 2 H(+) = thiamine phosphate + CO2 + diphosphate. The catalysed reaction is 2-(2-carboxy-4-methylthiazol-5-yl)ethyl phosphate + 4-amino-2-methyl-5-(diphosphooxymethyl)pyrimidine + 2 H(+) = thiamine phosphate + CO2 + diphosphate. It carries out the reaction 4-methyl-5-(2-phosphooxyethyl)-thiazole + 4-amino-2-methyl-5-(diphosphooxymethyl)pyrimidine + H(+) = thiamine phosphate + diphosphate. The protein operates within cofactor biosynthesis; thiamine diphosphate biosynthesis; thiamine phosphate from 4-amino-2-methyl-5-diphosphomethylpyrimidine and 4-methyl-5-(2-phosphoethyl)-thiazole: step 1/1. Its function is as follows. Condenses 4-methyl-5-(beta-hydroxyethyl)thiazole monophosphate (THZ-P) and 2-methyl-4-amino-5-hydroxymethyl pyrimidine pyrophosphate (HMP-PP) to form thiamine monophosphate (TMP). The protein is Thiamine-phosphate synthase of Helicobacter pylori (strain ATCC 700392 / 26695) (Campylobacter pylori).